The following is a 331-amino-acid chain: MEVPSAVTLNNYVGFDSITSQINRKLIRRGFQFNVMVVGPSGSGKSTLINTLFSAHLMDSKGRLDYQAPYRQTTEIHVTSQVVRENRVQLQLNLIDTPGYGDQINNDKCWEPIIKYIRDQHSSYLRRELNSHREKRLQDTRVHCCLFFIRPTGHSLRPIDIAVLKRLTEVVNVVPVIAKSDSLTLEERAAFKQQIREEFVKHDINLYPYDSDDADEEEINLNAAVRNLIPFAVVGSEKAIIVDGRPIRGRQNRWGVVNVDDENHCEFVFLRNFLMRTHLQDLIETTSYYHYEKFRFKQLSSLKEQSSLATRMGSPAPVYPSEPHLHTATAQ.

In terms of domain architecture, Septin-type G spans 29 to 301 (RGFQFNVMVV…EKFRFKQLSS (273 aa)). The G1 motif stretch occupies residues 39–46 (GPSGSGKS). Residues 39 to 46 (GPSGSGKS), Thr-73, Gly-99, 179 to 187 (KSDSLTLEE), Gly-235, and Arg-250 contribute to the GTP site. The tract at residues 96–99 (DTPG) is G3 motif. The G4 motif stretch occupies residues 178–181 (AKSD). Residues 311 to 331 (RMGSPAPVYPSEPHLHTATAQ) form a disordered region.

Belongs to the TRAFAC class TrmE-Era-EngA-EngB-Septin-like GTPase superfamily. Septin GTPase family. As to quaternary structure, component of the septin complex composed of two copies of each spn1, spn2, spn3 and spn4. Component of the sporulation-specific septin complex composed of at least spn2, spn5, spn6 and spn7.

Its subcellular location is the cytoplasm. It localises to the cell cortex. It is found in the forespore membrane. In terms of biological role, plays a role in the cell cycle. Involved in a late stage of septum formation leading to the separation of the daughter cells. Involved in the correct orientation of forespore membrane extension during sporulation. Binds phosphatidylinositol 4-phosphate. The polypeptide is Septin homolog spn2 (spn2) (Schizosaccharomyces pombe (strain 972 / ATCC 24843) (Fission yeast)).